The primary structure comprises 172 residues: Transcriptional regulator TAC1 (172 aa).

Residues 1 to 28 are disordered; it reads MENIKNPKNADDCSDSISKNSHQGVDDS. The span at 15–28 shows a compositional bias: polar residues; the sequence is DSISKNSHQGVDDS. A C2H2-type zinc finger spans residues 35 to 57; that stretch reads YVCSFCIRGFSNAQALGGHMNIH. An EAR-like (transcriptional repression) motif is present at residues 156-160; the sequence is LDLEL.

Preferentially expressed in roots and flowers. Slightly expressed in leaves and stems.

It is found in the nucleus. Functionally, activation factor which mediates telomerase activity and potentiates responses to auxin through the regulation of BT2. Binds in vitro to the DNA sequence 5'-GACAGTGTTAC-3' of the BT2 promoter. This is Transcriptional regulator TAC1 (TAC1) from Arabidopsis thaliana (Mouse-ear cress).